The following is a 274-amino-acid chain: Elongation factor Ts (274 aa).

Positions 79 to 82 are involved in Mg(2+) ion dislocation from EF-Tu; sequence TDFV.

The protein belongs to the EF-Ts family.

The protein localises to the cytoplasm. Its function is as follows. Associates with the EF-Tu.GDP complex and induces the exchange of GDP to GTP. It remains bound to the aminoacyl-tRNA.EF-Tu.GTP complex up to the GTP hydrolysis stage on the ribosome. This Aster yellows witches'-broom phytoplasma (strain AYWB) protein is Elongation factor Ts.